A 415-amino-acid chain; its full sequence is Serine--tRNA ligase (415 aa).

T231 to E233 contacts L-serine. R262–E264 is a binding site for ATP. Residue E285 coordinates L-serine. An ATP-binding site is contributed by E349–S352. L-serine is bound at residue S383.

This sequence belongs to the class-II aminoacyl-tRNA synthetase family. Type-1 seryl-tRNA synthetase subfamily. As to quaternary structure, homodimer. The tRNA molecule binds across the dimer.

Its subcellular location is the cytoplasm. It catalyses the reaction tRNA(Ser) + L-serine + ATP = L-seryl-tRNA(Ser) + AMP + diphosphate + H(+). It carries out the reaction tRNA(Sec) + L-serine + ATP = L-seryl-tRNA(Sec) + AMP + diphosphate + H(+). The protein operates within aminoacyl-tRNA biosynthesis; selenocysteinyl-tRNA(Sec) biosynthesis; L-seryl-tRNA(Sec) from L-serine and tRNA(Sec): step 1/1. Catalyzes the attachment of serine to tRNA(Ser). Is also able to aminoacylate tRNA(Sec) with serine, to form the misacylated tRNA L-seryl-tRNA(Sec), which will be further converted into selenocysteinyl-tRNA(Sec). In Helicobacter pylori (strain J99 / ATCC 700824) (Campylobacter pylori J99), this protein is Serine--tRNA ligase.